The sequence spans 139 residues: 3-hydroxyacyl-[acyl-carrier-protein] dehydratase FabZ (139 aa).

The active site involves His-47.

The protein belongs to the thioester dehydratase family. FabZ subfamily.

The protein localises to the cytoplasm. It catalyses the reaction a (3R)-hydroxyacyl-[ACP] = a (2E)-enoyl-[ACP] + H2O. Involved in unsaturated fatty acids biosynthesis. Catalyzes the dehydration of short chain beta-hydroxyacyl-ACPs and long chain saturated and unsaturated beta-hydroxyacyl-ACPs. The chain is 3-hydroxyacyl-[acyl-carrier-protein] dehydratase FabZ from Clostridium perfringens (strain ATCC 13124 / DSM 756 / JCM 1290 / NCIMB 6125 / NCTC 8237 / Type A).